Here is a 993-residue protein sequence, read N- to C-terminus: uncharacterized protein (993 aa).

A signal peptide spans 1-24; it reads MLLFKFNFTTAFLFTILAFAQARS. N-linked (GlcNAc...) asparagine glycans are attached at residues asparagine 7, asparagine 44, asparagine 89, asparagine 121, asparagine 138, asparagine 161, asparagine 169, asparagine 232, asparagine 361, asparagine 386, asparagine 393, asparagine 423, asparagine 447, asparagine 480, and asparagine 488. Glutamate 504 is a catalytic residue. 3 N-linked (GlcNAc...) asparagine glycosylation sites follow: asparagine 545, asparagine 548, and asparagine 614. The Proton donor role is filled by aspartate 672. 8 N-linked (GlcNAc...) asparagine glycosylation sites follow: asparagine 673, asparagine 814, asparagine 826, asparagine 835, asparagine 846, asparagine 910, asparagine 940, and asparagine 987.

It belongs to the glycosyl hydrolase 31 family.

This is an uncharacterized protein from Schizosaccharomyces pombe (strain 972 / ATCC 24843) (Fission yeast).